The sequence spans 292 residues: Phosphatidylglycerol--prolipoprotein diacylglyceryl transferase (292 aa).

7 helical membrane-spanning segments follow: residues Val-21 to Ala-41, Leu-60 to Tyr-80, Gly-98 to His-118, Phe-124 to Leu-144, Ser-198 to Ile-218, Gly-225 to Phe-245, and Ile-258 to Trp-278. Arg-143 is an a 1,2-diacyl-sn-glycero-3-phospho-(1'-sn-glycerol) binding site.

It belongs to the Lgt family.

It localises to the cell inner membrane. The catalysed reaction is L-cysteinyl-[prolipoprotein] + a 1,2-diacyl-sn-glycero-3-phospho-(1'-sn-glycerol) = an S-1,2-diacyl-sn-glyceryl-L-cysteinyl-[prolipoprotein] + sn-glycerol 1-phosphate + H(+). Its pathway is protein modification; lipoprotein biosynthesis (diacylglyceryl transfer). Its function is as follows. Catalyzes the transfer of the diacylglyceryl group from phosphatidylglycerol to the sulfhydryl group of the N-terminal cysteine of a prolipoprotein, the first step in the formation of mature lipoproteins. In Erwinia tasmaniensis (strain DSM 17950 / CFBP 7177 / CIP 109463 / NCPPB 4357 / Et1/99), this protein is Phosphatidylglycerol--prolipoprotein diacylglyceryl transferase.